A 208-amino-acid polypeptide reads, in one-letter code: Small ribosomal subunit protein uS4 (208 aa).

Positions Thr97–Leu160 constitute an S4 RNA-binding domain.

This sequence belongs to the universal ribosomal protein uS4 family. In terms of assembly, part of the 30S ribosomal subunit. Contacts protein S5. The interaction surface between S4 and S5 is involved in control of translational fidelity.

One of the primary rRNA binding proteins, it binds directly to 16S rRNA where it nucleates assembly of the body of the 30S subunit. Its function is as follows. With S5 and S12 plays an important role in translational accuracy. The sequence is that of Small ribosomal subunit protein uS4 from Xanthomonas oryzae pv. oryzae (strain MAFF 311018).